The following is a 423-amino-acid chain: Putative transmembrane protein ORF103 (423 aa).

Residues 43–57 (EPKIEQEEPQQKPEV) show a composition bias toward basic and acidic residues. The interval 43-91 (EPKIEQEEPQQKPEVVDVYSNETDKNEEEVSIITSEDEEEDEKGMLFKR) is disordered. Positions 67–84 (KNEEEVSIITSEDEEEDE) are enriched in acidic residues. 2 helical membrane passes run 125–145 (IIGI…VAVL) and 162–182 (FSLC…GLAI). The disordered stretch occupies residues 253 to 282 (DESGSEVSSEDEESDQETLLRNRKMPTNSK). The next 2 membrane-spanning stretches (helical) occupy residues 326–346 (LISA…IVGS) and 366–386 (IPTL…MCVL).

The protein resides in the host membrane. This chain is Putative transmembrane protein ORF103, found in Magallana gigas (Pacific oyster).